Here is a 1888-residue protein sequence, read N- to C-terminus: Eukaryotic translation initiation factor 4G (1888 aa).

Disordered regions lie at residues 1–259 (MSFN…PTTP), 391–420 (FDNK…TQPL), 449–662 (PLPS…SLQH), 726–761 (VAHS…KNSE), 838–903 (ADVS…DGEV), 961–1042 (AYKR…SGDR), 1083–1138 (TNVS…DPRL), 1331–1356 (GERE…EREE), 1462–1605 (KWQQ…PGDL), and 1639–1691 (RFAG…PSLP). Polar residues-rich tracts occupy residues 13-36 (GYTQ…SGTH) and 75-84 (VNSTDSSNAP). Over residues 171–183 (DEQKRDQARHESF) the composition is skewed to basic and acidic residues. Positions 185-195 (PVPPMPIPLAP) are enriched in pro residues. Composition is skewed to polar residues over residues 211–231 (NVGQ…NTGD), 244–259 (ASPN…PTTP), 393–405 (NKQS…TGTS), and 458–475 (NSQP…SQNV). Residues 497–506 (PNREHTRDTH) are compositionally biased toward basic and acidic residues. Residues 586 to 596 (IKSSPVISKQF) show a composition bias toward polar residues. Over residues 603–630 (VSLESQDSSSVQSSLTASSEESELAVAH) the composition is skewed to low complexity. Residues 631–645 (SEVRRENLLGSDLHK) show a composition bias toward basic and acidic residues. The span at 840-850 (VSASVSSSSTV) shows a compositional bias: low complexity. Residues 869–885 (NMSSNEVLKNVVKSDQP) show a composition bias toward polar residues. Basic and acidic residues predominate over residues 963–983 (KRPEEKKETVAHSESIERTES). The segment at 1048–1093 (KKYSRDFLLKFAEQFLDLPHNFEVTSDIESLMSTHTNVSHHHDRDP) is EIF4E-binding. The span at 1109–1124 (RLDRRGSNLVDDDRWS) shows a compositional bias: basic and acidic residues. The 224-residue stretch at 1239–1462 (QRQLKAILNK…KDAIDLRKNK (224 aa)) folds into the MIF4G domain. 2 stretches are compositionally biased toward basic and acidic residues: residues 1467–1484 (RKVE…DAAQ) and 1661–1674 (KDLR…DRSR). The MI domain occupies 1700–1824 (RLQQLSLTAI…SLREVADLIC (125 aa)).

The protein belongs to the eukaryotic initiation factor 4G family. As to quaternary structure, EIF4F is a multi-subunit complex, the composition of which varies with external and internal environmental conditions. It is composed of at least EIF4A, EIF4E and EIF4G. Interacts directly with eIF4E. In higher plants two isoforms of EIF4F have been identified, named isoform EIF4F and isoform EIF(iso)4F. Isoform EIF4F has subunits p220 and p26, whereas isoform EIF(iso)4F has subunits p82 and p28.

Functionally, component of the protein complex eIF4F, which is involved in the recognition of the mRNA cap, ATP-dependent unwinding of 5'-terminal secondary structure and recruitment of mRNA to the ribosome. The chain is Eukaryotic translation initiation factor 4G from Cucumis melo (Muskmelon).